The chain runs to 366 residues: S-adenosylmethionine:tRNA ribosyltransferase-isomerase (366 aa).

It belongs to the QueA family. As to quaternary structure, monomer.

It localises to the cytoplasm. It catalyses the reaction 7-aminomethyl-7-carbaguanosine(34) in tRNA + S-adenosyl-L-methionine = epoxyqueuosine(34) in tRNA + adenine + L-methionine + 2 H(+). Its pathway is tRNA modification; tRNA-queuosine biosynthesis. Transfers and isomerizes the ribose moiety from AdoMet to the 7-aminomethyl group of 7-deazaguanine (preQ1-tRNA) to give epoxyqueuosine (oQ-tRNA). The sequence is that of S-adenosylmethionine:tRNA ribosyltransferase-isomerase from Bradyrhizobium diazoefficiens (strain JCM 10833 / BCRC 13528 / IAM 13628 / NBRC 14792 / USDA 110).